Reading from the N-terminus, the 244-residue chain is MNIDLNADVGEGCASDSELLTLVSSANIACGFHAGDAQTMLTSVREALKNGVAIGAHPSFPDRDNFGRTAMALPPETVYAQTLYQIGALGAIVQAQGSVMRHVKPHGMLYNQAAKDPHLAQAIAKAVHDYDPSLILVGLAGSELIRAGERHRLVTRQEVFADRGYQADGSLVPRMQPGALIHDEEQALAQTLDMVQAGRVKSVTGVWTTVTAQTVCIHGDGEYALAFARRLRAAFNARNIHVIA.

It belongs to the LamB/PxpA family. In terms of assembly, forms a complex composed of PxpA, PxpB and PxpC.

It carries out the reaction 5-oxo-L-proline + ATP + 2 H2O = L-glutamate + ADP + phosphate + H(+). Catalyzes the cleavage of 5-oxoproline to form L-glutamate coupled to the hydrolysis of ATP to ADP and inorganic phosphate. The chain is 5-oxoprolinase subunit A from Salmonella dublin (strain CT_02021853).